Consider the following 211-residue polypeptide: WW domain-containing protein WWM1 (211 aa).

A WW domain is found at 9–43; sequence PQVPSGWKAVFDDEYQTWYYVDLSTNSSQWEPPRG. The segment at 32–116 is disordered; that stretch reads STNSSQWEPP…QRYYPQQAPM (85 aa). Residues Lys-50 and Lys-60 each participate in a glycyl lysine isopeptide (Lys-Gly) (interchain with G-Cter in ubiquitin) cross-link. Ser-75 is subject to Phosphoserine. Position 78 is a phosphothreonine (Thr-78). Low complexity predominate over residues 80–116; that stretch reads QVQAGAQAQQPRYYQPQQPQYPQYPQQQRYYPQQAPM.

Interacts with metacaspase MCA1.

It is found in the cytoplasm. The protein localises to the nucleus. It localises to the mitochondrion. In terms of biological role, involved in apoptosis. May play a role in nuclear function controlling cellular proliferation coupled to mitochondrial biogenesis. Causes impaired growth when overexpressed. In Saccharomyces cerevisiae (strain ATCC 204508 / S288c) (Baker's yeast), this protein is WW domain-containing protein WWM1 (WWM1).